We begin with the raw amino-acid sequence, 420 residues long: 3-phosphoshikimate 1-carboxyvinyltransferase (420 aa).

K20, S21, and R25 together coordinate 3-phosphoshikimate. Residue K20 participates in phosphoenolpyruvate binding. R119 is a binding site for phosphoenolpyruvate. Residues S161, S162, Q163, S189, D303, Q326, and K330 each coordinate 3-phosphoshikimate. Q163 is a phosphoenolpyruvate binding site. Catalysis depends on D303, which acts as the Proton acceptor. R334, R375, and K400 together coordinate phosphoenolpyruvate.

Belongs to the EPSP synthase family. Monomer.

It is found in the cytoplasm. The catalysed reaction is 3-phosphoshikimate + phosphoenolpyruvate = 5-O-(1-carboxyvinyl)-3-phosphoshikimate + phosphate. It functions in the pathway metabolic intermediate biosynthesis; chorismate biosynthesis; chorismate from D-erythrose 4-phosphate and phosphoenolpyruvate: step 6/7. Catalyzes the transfer of the enolpyruvyl moiety of phosphoenolpyruvate (PEP) to the 5-hydroxyl of shikimate-3-phosphate (S3P) to produce enolpyruvyl shikimate-3-phosphate and inorganic phosphate. The polypeptide is 3-phosphoshikimate 1-carboxyvinyltransferase (Dehalococcoides mccartyi (strain ATCC BAA-2266 / KCTC 15142 / 195) (Dehalococcoides ethenogenes (strain 195))).